A 731-amino-acid chain; its full sequence is 1,4-alpha-glucan branching enzyme GlgB (731 aa).

The Nucleophile role is filled by Asp412. The Proton donor role is filled by Glu465.

The protein belongs to the glycosyl hydrolase 13 family. GlgB subfamily. Monomer.

It catalyses the reaction Transfers a segment of a (1-&gt;4)-alpha-D-glucan chain to a primary hydroxy group in a similar glucan chain.. The protein operates within glycan biosynthesis; glycogen biosynthesis. Its function is as follows. Catalyzes the formation of the alpha-1,6-glucosidic linkages in glycogen by scission of a 1,4-alpha-linked oligosaccharide from growing alpha-1,4-glucan chains and the subsequent attachment of the oligosaccharide to the alpha-1,6 position. This Bordetella parapertussis (strain 12822 / ATCC BAA-587 / NCTC 13253) protein is 1,4-alpha-glucan branching enzyme GlgB.